A 94-amino-acid chain; its full sequence is Co-chaperonin GroES (94 aa).

It belongs to the GroES chaperonin family. In terms of assembly, heptamer of 7 subunits arranged in a ring. Interacts with the chaperonin GroEL.

The protein localises to the cytoplasm. In terms of biological role, together with the chaperonin GroEL, plays an essential role in assisting protein folding. The GroEL-GroES system forms a nano-cage that allows encapsulation of the non-native substrate proteins and provides a physical environment optimized to promote and accelerate protein folding. GroES binds to the apical surface of the GroEL ring, thereby capping the opening of the GroEL channel. The protein is Co-chaperonin GroES of Lactobacillus gasseri (strain ATCC 33323 / DSM 20243 / BCRC 14619 / CIP 102991 / JCM 1131 / KCTC 3163 / NCIMB 11718 / NCTC 13722 / AM63).